A 367-amino-acid polypeptide reads, in one-letter code: Cycloaraneosene synthase sdnA (367 aa).

The first 24 residues, 1–24, serve as a signal peptide directing secretion; that stretch reads MSLYGLFTLATSYLPSVGGGAALA. 3 residues coordinate Mg(2+): Asp115, Asn260, and Ser264. Positions 115–119 match the DDXXD motif motif; sequence DDQFD. N-linked (GlcNAc...) asparagine glycosylation occurs at Asn276.

Belongs to the terpene synthase family. Mg(2+) is required as a cofactor.

The enzyme catalyses (2E,6E,10E)-geranylgeranyl diphosphate = cycloaraneosene + diphosphate. The protein operates within antibiotic biosynthesis. Its function is as follows. Cycloaraneosene synthase; part of the gene cluster that mediates the biosynthesis of sordarin and hypoxysordarin, glycoside antibiotics with a unique tetracyclic diterpene aglycone structure. First, the geranylgeranyl diphosphate synthase sdnC constructs GGDP from farnesyl diphosphate and isopentenyl diphosphate. The diterpene cyclase sdnA then catalyzes the cyclization of GGDP to afford cycloaraneosene. Cycloaraneosene is then hydroxylated four times by the putative cytochrome P450 monooxygenases sdnB, sdnE, sdnF and sdnH to give a hydroxylated cycloaraneosene derivative such as cycloaraneosene-8,9,13,19-tetraol. Although the order of the hydroxylations is unclear, at least C8, C9 and C13 of the cycloaraneosene skeleton are hydroxylated before the sordaricin formation. Dehydration of the 13-hydroxy group of the hydroxylated cycloaraneosene derivative might be catalyzed by an unassigned hypothetical protein such as sdnG and sdnP to construct the cyclopentadiene moiety. The FAD-dependent oxidoreductase sdnN is proposed to catalyze the oxidation at C9 of the hydroxylated cycloaraneosene derivative and also catalyze the Baeyer-Villiger oxidation to give the lactone intermediate. The presumed lactone intermediate would be hydrolyzed to give an acrolein moiety and a carboxylate moiety. Then, [4+2]cycloaddition would occur between the acrolein moiety and the cyclopentadiene moiety to give sordaricin. SdnN might also be involved in the [4+2]cycloaddition after the hypothesized oxidation to accommodate the oxidized product and prompt the [4+2]cycloaddition. GDP-6-deoxy-D-altrose may be biosynthesized from GDP-D-mannose by the putative GDP-mannose-4,6-dehydratase sdnI and the short-chain dehydrogenase sdnK. The glycosyltransferase sdnJ catalyzes the attachment of 6-deoxy-D-altrose onto the 19-hydroxy group of sordaricin to give 4'-O-demethylsordarin. The methyltransferase sdnD would complete the biosynthesis of sordarin. Sordarin can be further modified into hypoxysordarin. The unique acyl chain at the 3'-hydroxy group of hypoxysordarin would be constructed by an iterative type I PKS sdnO and the trans-acting polyketide methyltransferase sdnL. SdnL would be responsible for the introduction of an alpha-methyl group of the polyketide chain. Alternatively, the beta-lactamase-like protein sdnR might be responsible for the cleavage and transfer of the polyketide chain from the PKS sdnO to sordarin. Two putative cytochrome P450 monooxygenases, sdnQ and sdnT, might catalyze the epoxidations of the polyketide chain to complete the biosynthesis of hypoxysordarin. Transcriptional regulators sdnM and sdnS are presumably encoded for the transcriptional regulation of the expression of the sdn gene cluster. This chain is Cycloaraneosene synthase sdnA, found in Sordaria araneosa (Pleurage araneosa).